We begin with the raw amino-acid sequence, 811 residues long: MSSLLSFYRNILNFPLSLLVKSQAIPTDPVSELGLNLEQPIIYVLPYTSQTDLLILQKNCLALNLPDPLVENDIQGQSLPRYVFLDEGHRFFKSKGVKSETESLFYRYLDLHKTDETLDVQLVPVSVLWGRSPGKETAPSLRLLSRFQRIIAMIWFGRDNFVRFSQAVSLCYMVKEYGAEKGIAQKLARVAKIHFAKQRYSAMGPRLPERQAMFDKLIQLPTIVQAIEDEAKTKKIPIPKARQEAEKILDEIAADVSHGTLRMADRVLSWLWNKLYQGINVQNADRVRKLALEGHEIIYVPCHRSHMDYLLLSYILYHQGVVPPHIAAGINLNFWPAGPFFRRGGAFFIRRTFKGNRLYSTVFREYLAELFYRGYSVEYFIEGGRSRTGRLLEPKTGMVSMTLQALQRGLNRPISIVPVYIGYEHVLEVDTYAKELRGAAKEKENAELVLRVIKKLRNLGQGYVNFGKPIQVNSYLNQHFPEWKLPPVENVRPKWLNEAVDAIAKQVMVNINNAAAVNAKNLIGSVLLASRQRALSREQLIEQVESYLQLFQNVSYSSDIILPTESADEMLEHVLALPRSGVMSEKDNFGEMIRLDRESAVLMTYYRNNIQHLFVLPSLVASIVLHNEAASKTLIRETVSHIYPFLKAELFLHFDEKEVLEQVELILTEFIRQQIVKYDGDVLTINRRRLPTLQLHAAGIREILQRYYISLSLLLECPAISRTLLEKESRMIAQRLSILHGINAPEFFDKAIFSTFTASLKAQGYFDLEGHTVIEKVEEVAHILRRLISVEVQLTIQGAMDKVDQIDEKLE.

The HXXXXD motif signature appears at 303–308; it reads HRSHMD.

This sequence belongs to the GPAT/DAPAT family.

It localises to the cell inner membrane. It carries out the reaction sn-glycerol 3-phosphate + an acyl-CoA = a 1-acyl-sn-glycero-3-phosphate + CoA. The protein operates within phospholipid metabolism; CDP-diacylglycerol biosynthesis; CDP-diacylglycerol from sn-glycerol 3-phosphate: step 1/3. The sequence is that of Glycerol-3-phosphate acyltransferase from Haemophilus ducreyi (strain 35000HP / ATCC 700724).